A 288-amino-acid polypeptide reads, in one-letter code: Phosphatidate cytidylyltransferase (288 aa).

7 consecutive transmembrane segments (helical) span residues 10-30 (IVLI…YFAL), 52-72 (PLIR…WLYT), 89-109 (LLLI…ISYP), 118-138 (NPLL…AGVL), 152-172 (GLFL…GAYF), 192-212 (WEGV…FIHF), and 223-243 (ITGF…GDLT).

Belongs to the CDS family.

It is found in the cell inner membrane. It catalyses the reaction a 1,2-diacyl-sn-glycero-3-phosphate + CTP + H(+) = a CDP-1,2-diacyl-sn-glycerol + diphosphate. Its pathway is phospholipid metabolism; CDP-diacylglycerol biosynthesis; CDP-diacylglycerol from sn-glycerol 3-phosphate: step 3/3. This is Phosphatidate cytidylyltransferase (cdsA) from Haemophilus influenzae (strain ATCC 51907 / DSM 11121 / KW20 / Rd).